The sequence spans 36 residues: Photosystem I reaction center subunit VIII (36 aa).

Residues 8–28 (SILVPLVGLVFPAIAMASLFL) form a helical membrane-spanning segment.

Belongs to the PsaI family.

The protein localises to the plastid. It is found in the chloroplast thylakoid membrane. Its function is as follows. May help in the organization of the PsaL subunit. This Vitis vinifera (Grape) protein is Photosystem I reaction center subunit VIII.